Consider the following 333-residue polypeptide: UDP-glucose 4-epimerase (333 aa).

NAD(+)-binding positions include 11-12, 32-37, 52-53, 75-79, Asn-94, Thr-119, Tyr-143, Lys-147, and Phe-171; these read YI, DSLVTG, DL, and FAAYS. Positions 119 and 143 each coordinate substrate. The Proton acceptor role is filled by Tyr-143. Substrate is bound by residues Asn-172, 191–192, 208–210, Arg-223, and 284–287; these read HL, MIF, and RSGD.

The protein belongs to the NAD(P)-dependent epimerase/dehydratase family. Homodimer. The cofactor is NAD(+).

It catalyses the reaction UDP-alpha-D-glucose = UDP-alpha-D-galactose. The protein operates within carbohydrate metabolism; galactose metabolism. Involved in the metabolism of galactose. Catalyzes the conversion of UDP-galactose (UDP-Gal) to UDP-glucose (UDP-Glc) through a mechanism involving the transient reduction of NAD. This is UDP-glucose 4-epimerase (galE) from Streptococcus mutans serotype c (strain ATCC 700610 / UA159).